An 89-amino-acid chain; its full sequence is Small ribosomal subunit protein uS14A (89 aa).

The protein belongs to the universal ribosomal protein uS14 family. Part of the 30S ribosomal subunit. Contacts proteins S3 and S10.

Binds 16S rRNA, required for the assembly of 30S particles and may also be responsible for determining the conformation of the 16S rRNA at the A site. The protein is Small ribosomal subunit protein uS14A of Levilactobacillus brevis (strain ATCC 367 / BCRC 12310 / CIP 105137 / JCM 1170 / LMG 11437 / NCIMB 947 / NCTC 947) (Lactobacillus brevis).